The following is a 779-amino-acid chain: Serine/threonine-protein kinase SIK1 (779 aa).

Residues 27 to 278 enclose the Protein kinase domain; that stretch reads YDVERTLGKG…IAQIRQHRWM (252 aa). ATP is bound by residues 33–41 and Lys-56; that span reads LGKGNFAVV. Residue Asp-149 is the Proton acceptor of the active site. The residue at position 182 (Thr-182) is a Phosphothreonine; by LKB1 and GSK3-beta. The residue at position 186 (Ser-186) is a Phosphoserine; by autocatalysis. The region spanning 303–343 is the UBA domain; that stretch reads DYNEQVLGIMQALGIDRQRTIESLQNSSYNHFAAIYYLLLE. Thr-322 is subject to Phosphothreonine; by CaMK1. Disordered stretches follow at residues 350 to 375 and 449 to 472; these read SAQPSSRPTPAPTRQPQLRSSDLSSL and EARQGPSLEEEQEVQEPLPGSTGR. Over residues 363–373 the composition is skewed to polar residues; sequence RQPQLRSSDLS. Residue Ser-577 is modified to Phosphoserine; by PKA. An RK-rich region region spans residues 586-612; it reads KAFRQQLRKNARTKGFLGLNKIKGLAR. The interval 621 to 641 is disordered; sequence TPRGGMSTFHTPAPSSGLQGC. The span at 628 to 641 shows a compositional bias: polar residues; the sequence is TFHTPAPSSGLQGC.

The protein belongs to the protein kinase superfamily. CAMK Ser/Thr protein kinase family. AMPK subfamily. Interacts (when phosphorylated on Thr-182 and Ser-186) with YWHAZ. Interacts with ATP1A1. The cofactor is Mg(2+). In terms of processing, phosphorylated at Thr-182 by STK11/LKB1 in complex with STE20-related adapter-alpha (STRADA) pseudo kinase and CAB39, leading to its activation. Phosphorylation at Thr-182 promotes autophosphorylation at Ser-186, which is required for sustained activity. Autophosphorylation at Ser-186 is maintained by sequential phosphorylation at Thr-182 by GSK3-beta. GSK3-beta cannot initiate phosphorylation at Thr-182, it can only maintain it. Phosphorylation at Ser-577 by PKA promotes translocation to the cytoplasm. Phosphorylation at Thr-322 by CaMK1 following intracellular sodium concentration leads to activation. As to expression, expressed in lung, skin, ovary, heart and stomach. No expression in brain, liver or adult skeletal muscle but is present in skeletal muscle progenitor cells of the somite beginning at 9.5 dpc. Present at 8.0 dpc in the monolayer of presumptive myocardial cells but rapidly down-regulated at 8.5 dpc upon primitive ventricle formation, although still present in myocardial cells that will populate the primitive atrium and bulbus cordis. At 9.5 dpc expression is down-regulated in the primitive atrium but observed in the sinus venosus and truncus arteriosus.

It localises to the cytoplasm. Its subcellular location is the nucleus. It catalyses the reaction L-seryl-[protein] + ATP = O-phospho-L-seryl-[protein] + ADP + H(+). It carries out the reaction L-threonyl-[protein] + ATP = O-phospho-L-threonyl-[protein] + ADP + H(+). Activated by phosphorylation on Thr-182. Also activated by phosphorylation on Thr-322 in response to increases in intracellular sodium in parallel with elevations in intracellular calcium through the reversible sodium/calcium exchanger. Functionally, serine/threonine-protein kinase involved in various processes such as cell cycle regulation, gluconeogenesis and lipogenesis regulation, muscle growth and differentiation and tumor suppression. Phosphorylates HDAC4, HDAC5, PPME1, SREBF1, CRTC1/TORC1 and CRTC2/TORC2. Acts as a tumor suppressor and plays a key role in p53/TP53-dependent anoikis, a type of apoptosis triggered by cell detachment: required for phosphorylation of p53/TP53 in response to loss of adhesion and is able to suppress metastasis. Part of a sodium-sensing signaling network, probably by mediating phosphorylation of PPME1: following increases in intracellular sodium, SIK1 is activated by CaMK1 and phosphorylates PPME1 subunit of protein phosphatase 2A (PP2A), leading to dephosphorylation of sodium/potassium-transporting ATPase ATP1A1 and subsequent increase activity of ATP1A1. Acts as a regulator of muscle cells by phosphorylating and inhibiting class II histone deacetylases HDAC4 and HDAC5, leading to promote expression of MEF2 target genes in myocytes. Also required during cardiomyogenesis by regulating the exit of cardiomyoblasts from the cell cycle via down-regulation of CDKN1C/p57Kip2. Acts as a regulator of hepatic gluconeogenesis by phosphorylating and repressing the CREB-specific coactivators CRTC1/TORC1 and CRTC2/TORC2, leading to inhibit CREB activity. Also regulates hepatic lipogenesis by phosphorylating and inhibiting SREBF1. In concert with CRTC1/TORC1, regulates the light-induced entrainment of the circadian clock by attenuating PER1 induction; represses CREB-mediated transcription of PER1 by phosphorylating and deactivating CRTC1/TORC1. In Mus musculus (Mouse), this protein is Serine/threonine-protein kinase SIK1 (Sik1).